Reading from the N-terminus, the 166-residue chain is UPF0304 protein PBPRA2768 (166 aa).

Belongs to the UPF0304 family.

The polypeptide is UPF0304 protein PBPRA2768 (Photobacterium profundum (strain SS9)).